The primary structure comprises 270 residues: Ribosomal RNA small subunit methyltransferase J (270 aa).

S-adenosyl-L-methionine-binding positions include 126–127 (ER) and Asp-182.

Belongs to the methyltransferase superfamily. RsmJ family.

Its subcellular location is the cytoplasm. The catalysed reaction is guanosine(1516) in 16S rRNA + S-adenosyl-L-methionine = N(2)-methylguanosine(1516) in 16S rRNA + S-adenosyl-L-homocysteine + H(+). Its function is as follows. Specifically methylates the guanosine in position 1516 of 16S rRNA. The polypeptide is Ribosomal RNA small subunit methyltransferase J (Acinetobacter baylyi (strain ATCC 33305 / BD413 / ADP1)).